The primary structure comprises 453 residues: Oocyte zinc finger protein XlCOF6 (453 aa).

14 consecutive C2H2-type zinc fingers follow at residues 6–29, 67–89, 95–117, 123–145, 151–173, 179–201, 207–229, 235–257, 263–285, 291–313, 319–341, 375–397, 403–425, and 431–453; these read FICSKCGETFTVNSHLLTHLCGKH, FTCTECGKSFSERDNLKCHHKTH, FTCMECGKGFSVKSSLKHHYKAH, VRCTECGKEFTSKYYLNVHKRLH, FTCTQCGKCFSDKSALKYHHKTH, FACTECGKSFTEKSILQKHQRTH, FTCTECGKSYSAMSTLECHRRTH, FTCTECGKSFTEKSILRKHHKTH, FTCTECGKSCTEKSILRKHQITH, FTCTECGKCFSDKTALKYHHKTH, FACTECGKSFTDKSILRNHQRTH, FTCTECGKSFTHKSILQKHQRTH, and FTCTECGKCFSDKTAIKYHRITH.

The protein belongs to the krueppel C2H2-type zinc-finger protein family.

Its subcellular location is the nucleus. Its function is as follows. May be involved in transcriptional regulation. This is Oocyte zinc finger protein XlCOF6 from Xenopus laevis (African clawed frog).